Consider the following 706-residue polypeptide: Probable protein S-acyltransferase 20 (706 aa).

The next 2 helical transmembrane spans lie at 16-36 and 41-61; these read VIAITVFCLLVVAFYAFFAPF and IWEYVLIGVYSPVAILVFVLY. Residues 172–222 form the DHHC domain; that stretch reads LFCTLCNCEVRKFSKHCRSCDKCVDCFDHHCKWLNNCVGRKNYVTFVSLMS. Cys-202 (S-palmitoyl cysteine intermediate) is an active-site residue. The next 2 membrane-spanning stretches (helical) occupy residues 220 to 240 and 275 to 295; these read LMSASLLWLIIEAAVGIAVIV and AVAIFACFPLGELLFFHMLLI. 3 disordered regions span residues 470 to 505, 591 to 621, and 680 to 706; these read SSLSRNSFAPSQGSRDEYDTGSHGMSNLSSPSHVHE, LNPSSQTASTQNPRPILPAHDSSSGSSALRD, and RDSTSNQLPVFAPGGLGANSQTGSNIK. Polar residues-rich tracts occupy residues 492–501, 591–603, and 697–706; these read HGMSNLSSPS, LNPSSQTASTQNP, and ANSQTGSNIK.

This sequence belongs to the DHHC palmitoyltransferase family.

It is found in the cell membrane. The protein resides in the cytoplasmic vesicle membrane. The enzyme catalyses L-cysteinyl-[protein] + hexadecanoyl-CoA = S-hexadecanoyl-L-cysteinyl-[protein] + CoA. Palmitoyl acyltransferase. This chain is Probable protein S-acyltransferase 20 (PAT20), found in Arabidopsis thaliana (Mouse-ear cress).